Reading from the N-terminus, the 484-residue chain is MAAKKVFGSAEASNLVTELRRSFDDGVTRGYEWRVTQLKKLMIICDNHEPEIVAALRDDLGKPELESSVYEVSLLRNSIKLALKQLKNWMAPEKAKTSLTTFPASAEIVSEPLGVVLVISAWNYPFLLSIDPVIGAISAGNAVVLKPSELAPASSALLTKLLEQYLDPSAVRVVEGAVTETSALLEQKWDKIFYTGSSKIGRVIMAAAAKHLTPVVLELGGKSPVVVDSDTDLKVTVRRIIVGKWGCNNGQACVSPDYILTTKEYAPKLIDAMKLELEKFYGKNPIESKDMSRIVNSNHFDRLSKLLDEKEVSDKIVYGGEKDRENLKIAPTILLDVPLDSLIMSEEIFGPLLPILTLNNLEESFDVIRSRPKPLAAYLFTHNKKLKERFAATVSAGGIVVNDIAVHLALHTLPFGGVGESGMGAYHGKFSFDAFSHKKAVLYRSLFGDSAVRYPPYSRGKLRLLKALVDSNIFDLFKVLLGLA.

An NAD(+)-binding site is contributed by 196–201; that stretch reads GSSKIG. Catalysis depends on E218, which acts as the Proton acceptor. C253 acts as the Nucleophile in catalysis.

It belongs to the aldehyde dehydrogenase family. In terms of assembly, homodimer and homomultimer. As to expression, isoform alpha is expressed in expanded leaves and flowers. Detected in seedlings. Isoform beta is mainly expressed in flowers. Detected in leaves and seedlings.

It catalyses the reaction an aldehyde + NAD(+) + H2O = a carboxylate + NADH + 2 H(+). Its activity is regulated as follows. Thiol-based regulation. Inactivation after dimerization under oxidizing conditions. In terms of biological role, involved in oxidative stress tolerance by detoxifying reactive aldehydes derived from lipid peroxidation. Medium- to long-chain saturated aldehydes are preferred substrates, while the short-chain aldehyde propanal is a weak substrate. Is strictely NAD(+) specific. In Arabidopsis thaliana (Mouse-ear cress), this protein is Aldehyde dehydrogenase family 3 member H1 (ALDH3H1).